The sequence spans 81 residues: MAVKMRLLRVGAKGQPSYRVVVADERSPRDGRFIEIVGFYNPRTEPETIQLKEDRVKYWLSVGVKPTDSVRILLRKANMLS.

Belongs to the bacterial ribosomal protein bS16 family.

The chain is Small ribosomal subunit protein bS16 from Coprothermobacter proteolyticus (strain ATCC 35245 / DSM 5265 / OCM 4 / BT).